A 386-amino-acid chain; its full sequence is MFSVRVPLATITDQQQLQVSPLKALSLADKENTPPSLSATPVLASKVARRILQDVAEPESKVSTNPSVEDEPLLRENPRRFVVFPIEYHDIWKMYKKAEASFWTAEEVDLSKDIQHWEALKPDERHFISHVLAFFAASDGIVNENLVERFSQEVQVTEARCFYGFQIAMENIHSEMYSLLIDTYIKDSKEREYLFNAIETMPCVKKKADWALRWIGDKEATYGERVVAFAAVEGIFFSGSFASIFWLKKRGLMPGLTFSNELISRDEGLHCDFACLMFKHLVHKPSEQRVQEIITNAVRIEQEFLTEALPVKLIGMNCTLMKQYIEFVADRLMLELGFNKIFKVENPFDFMENISLEGKTNFFEKRVGEYQRMGVMSNSFTLDADF.

A Phosphoserine modification is found at serine 20. The residue at position 33 (threonine 33) is a Phosphothreonine. A Cy motif is present at residues 49-51 (RRI). 3 residues coordinate Fe cation: aspartate 139, glutamate 170, and histidine 173. The active site involves tyrosine 177. Residues glutamate 233, glutamate 267, and histidine 270 each coordinate Fe cation.

The protein belongs to the ribonucleoside diphosphate reductase small chain family. Heterodimer of a large and a small subunit. Interacts (via Cy motif and when phosphorylated at Thr-33) with CCNF; the interaction occurs exclusively in G2 and early M. Requires Fe cation as cofactor. In terms of processing, phosphorylation on Ser-20 relieves the inhibitory effect on Wnt signaling. Phosphorylated on Thr-33 by CDK1 and CDK2; predominantly in G2 and M phase. Post-translationally, ubiquitinated by the SCF(CCNF) E3 ubiquitin-protein ligase complex; leading to its degradation by the proteasome.

It localises to the cytoplasm. The protein resides in the nucleus. The catalysed reaction is a 2'-deoxyribonucleoside 5'-diphosphate + [thioredoxin]-disulfide + H2O = a ribonucleoside 5'-diphosphate + [thioredoxin]-dithiol. Functionally, provides the precursors necessary for DNA synthesis. Catalyzes the biosynthesis of deoxyribonucleotides from the corresponding ribonucleotides. Inhibits Wnt signaling. This is Ribonucleoside-diphosphate reductase subunit M2 (RRM2) from Mesocricetus auratus (Golden hamster).